We begin with the raw amino-acid sequence, 792 residues long: Phosphatidylinositol 4-phosphate 5-kinase type-1 sktl (792 aa).

Residues 1–21 (MDTRVELELEPVGKQDRLKDQ) are compositionally biased toward basic and acidic residues. Disordered stretches follow at residues 1–74 (MDTR…QPGT), 105–139 (TQTP…KKLG), 423–446 (AKLQ…DAPE), 577–612 (TPTF…PTNA), and 640–714 (AAST…TDLS). 2 stretches are compositionally biased toward polar residues: residues 52–62 (QTASPDQEATP) and 105–131 (TQTP…STTG). The 419-residue stretch at 155-573 (QSKQIMGSIQ…RFQDAMGKQV (419 aa)) folds into the PIPK domain. The span at 642-658 (STSSLQQQRSSNQSNNN) shows a compositional bias: low complexity. Positions 678–702 (EPSSTYHTQYSYDSSGRTGSALTSD) are enriched in polar residues.

Interacts with ash2 (via B30.2/SPRY domain); the interaction is direct and seems to be specific for ash2 isoform B.

It localises to the cytoplasm. Its subcellular location is the cell cortex. It is found in the nucleus. The protein localises to the chromosome. The protein resides in the apical cell membrane. It localises to the cell projection. Its subcellular location is the cilium. It is found in the flagellum membrane. It carries out the reaction a 1,2-diacyl-sn-glycero-3-phospho-(1D-myo-inositol 4-phosphate) + ATP = a 1,2-diacyl-sn-glycero-3-phospho-(1D-myo-inositol-4,5-bisphosphate) + ADP + H(+). Its function is as follows. Catalyzes the phosphorylation of phosphatidylinositol 4-phosphate (PtdIns[4]P) to form phosphatidylinositol 4,5-bisphosphate (PtdIns[4,5]P(2)), a lipid second messenger that regulates several cellular processes such as signal transduction, vesicle trafficking, actin cytoskeleton dynamics, cell adhesion, and cell motility. PtdIns[4,5]P(2) can directly act as a second messenger or can be utilized as a precursor to generate other second messengers: inositol 1,4,5-trisphosphate (IP3), diacylglycerol (DAG) or phosphatidylinositol-3,4,5-trisphosphate (PtdIns[3,4,5]P(3)). Required for germline development during oogenesis. Sktl is the major phosphatidylinositol 4-phosphate 5-kinase responsible for enrichment of PtdIns[4,5]P(2) in the apical plasma membrane of the oocyte and follicular epithelium cells of the egg chamber during oogenesis. Involved in nuclear anchoring and microtubule organization required for targeted mRNA transport during maintenance of oocyte polarity. The PtdIns[4,5]P(2) produced by sktl is required for maintenance of cellular polarity, prevention of the epithelial-mesenchymal transition process, maintenance of adherens junctions and regulation of apical constriction, probably by affecting polarized cortical recruitment of PAR proteins and their effectors, including baz/bazooka, aPKC, par-1 and l(2)gl. Involved in actin cytoskeleton organization probably through PtdIns[4,5]P(2)-mediated regulation of Moe/Moesin phosphorylation. Involved in PtdIns[4,5]P(2)-mediated apical recruitment of the formin dia/diaphanous in tubular epithelial cells. Involved in anterodorsal cell morphogenesis and eggshell dorsal appendage formation, probably through regulation of apical constriction by PtdIns[4,5]P(2) during tubulogenesis. Required for cell viability or proliferation during wing and eye imaginal disk development. May be involved in cytoskeletal regulation during sensory bristle development. Together with mys/integrin beta localizes to the trailing edge of larval epidermal cells in a JNK signaling-dependent manner during wound healing and is required for setting up cell polarity and re-epithelialization. Required for polarization of elongating spermatid cysts possibly by generation of PtdIns[4,5]P(2) involved in mediating membrane association and orientation of the nucleus-basal body pair. Probably involved in PtdIns[4,5]P(2)-mediated recruitment of exocyst proteins that may mediate membrane addition during spermatid elongation. Involved in maintenance of specialised cell contacts known as slit diaphragms required for nephrocyte morphogenesis and function. Regulates nephrocyte endocytosis, possibly through PtdIns[4,5]P(2)-mediated recruitment of effector proteins. Not required for nervous system development or neurotransmitter release at the neuromuscular junction. Together with ash2 probably plays a role in maintenance of transcriptionally active chromatin through down-regulation of histone H1 hyperphosphorylation. The sequence is that of Phosphatidylinositol 4-phosphate 5-kinase type-1 sktl from Drosophila melanogaster (Fruit fly).